The following is a 193-amino-acid chain: Peptidyl-tRNA hydrolase (193 aa).

Tyr17 contacts tRNA. Residue His22 is the Proton acceptor of the active site. 3 residues coordinate tRNA: Tyr68, Asn70, and Asn116.

This sequence belongs to the PTH family. In terms of assembly, monomer.

Its subcellular location is the cytoplasm. The enzyme catalyses an N-acyl-L-alpha-aminoacyl-tRNA + H2O = an N-acyl-L-amino acid + a tRNA + H(+). In terms of biological role, hydrolyzes ribosome-free peptidyl-tRNAs (with 1 or more amino acids incorporated), which drop off the ribosome during protein synthesis, or as a result of ribosome stalling. Functionally, catalyzes the release of premature peptidyl moieties from peptidyl-tRNA molecules trapped in stalled 50S ribosomal subunits, and thus maintains levels of free tRNAs and 50S ribosomes. The sequence is that of Peptidyl-tRNA hydrolase from Acinetobacter baumannii (strain AB0057).